Reading from the N-terminus, the 207-residue chain is Large ribosomal subunit protein uL4 (207 aa).

Residues Asn-53–Gly-76 form a disordered region. The segment covering Gly-60–Gly-71 has biased composition (basic residues).

Belongs to the universal ribosomal protein uL4 family. In terms of assembly, part of the 50S ribosomal subunit.

Functionally, one of the primary rRNA binding proteins, this protein initially binds near the 5'-end of the 23S rRNA. It is important during the early stages of 50S assembly. It makes multiple contacts with different domains of the 23S rRNA in the assembled 50S subunit and ribosome. Its function is as follows. Forms part of the polypeptide exit tunnel. The protein is Large ribosomal subunit protein uL4 of Staphylococcus saprophyticus subsp. saprophyticus (strain ATCC 15305 / DSM 20229 / NCIMB 8711 / NCTC 7292 / S-41).